Consider the following 361-residue polypeptide: Probable dual-specificity RNA methyltransferase RlmN (361 aa).

Catalysis depends on E91, which acts as the Proton acceptor. The 233-residue stretch at 97–329 folds into the Radical SAM core domain; that stretch reads QHYGLSVCVT…KKKGGNCVVR (233 aa). C104 and C340 are oxidised to a cystine. Residues C111, C115, and C118 each coordinate [4Fe-4S] cluster. Residues 163–164, S195, 218–220, and N296 contribute to the S-adenosyl-L-methionine site; these read GE and SLH. Residue C340 is the S-methylcysteine intermediate of the active site.

Belongs to the radical SAM superfamily. RlmN family. The cofactor is [4Fe-4S] cluster.

It localises to the cytoplasm. It carries out the reaction adenosine(2503) in 23S rRNA + 2 reduced [2Fe-2S]-[ferredoxin] + 2 S-adenosyl-L-methionine = 2-methyladenosine(2503) in 23S rRNA + 5'-deoxyadenosine + L-methionine + 2 oxidized [2Fe-2S]-[ferredoxin] + S-adenosyl-L-homocysteine. The catalysed reaction is adenosine(37) in tRNA + 2 reduced [2Fe-2S]-[ferredoxin] + 2 S-adenosyl-L-methionine = 2-methyladenosine(37) in tRNA + 5'-deoxyadenosine + L-methionine + 2 oxidized [2Fe-2S]-[ferredoxin] + S-adenosyl-L-homocysteine. Specifically methylates position 2 of adenine 2503 in 23S rRNA and position 2 of adenine 37 in tRNAs. In Streptococcus pneumoniae (strain P1031), this protein is Probable dual-specificity RNA methyltransferase RlmN.